Reading from the N-terminus, the 376-residue chain is MQKTAIIAEYNPFHNGHYYQAQTARHETGADVMIAIMSAQFTQRGEPASFDKWKRAKAAVESGAIDLVIELPTQYGVQRADRFASASVSIAEQLRCQTLSFGSESGDIDAILHAARSHVEETPRYKEALKKALQEGHSSAQASSRAFRTVYPSFDLTRPNNILGYHYAKAAKSIQLHTVKRLGADYHDPSLMDVMSATGIRAHYLDIGEVRAVPASTEAMFRTRPMTHWEHYWPVLQFKLRTLPLHTMMELVGIDASLAPRLKQAGVEPSFERALAAVSTRRYTRTAIQRAFVAVLLHWLKDEAPTRFDEVPYVRPLAFNDLGRLALRDVKDDVPLVSKFDARLDFEARVTEAYRLPLQDDALIEHRQRPQFISSK.

ATP is bound by residues 7–20, G102, N160, and R181; that span reads IAEYNPFHNGHYYQ.

Belongs to the TmcAL family.

The protein resides in the cytoplasm. It carries out the reaction cytidine(34) in elongator tRNA(Met) + acetate + ATP = N(4)-acetylcytidine(34) in elongator tRNA(Met) + AMP + diphosphate. Its function is as follows. Catalyzes the formation of N(4)-acetylcytidine (ac(4)C) at the wobble position of elongator tRNA(Met), using acetate and ATP as substrates. First activates an acetate ion to form acetyladenylate (Ac-AMP) and then transfers the acetyl group to tRNA to form ac(4)C34. The sequence is that of tRNA(Met) cytidine acetate ligase from Exiguobacterium sp. (strain ATCC BAA-1283 / AT1b).